The sequence spans 485 residues: MQFRSIIRIVGLLLALFSVTMLAPALVALLYRDGAGVPFVTTFFVLLFCGAMCWFPNRRHKHELKSRDGFLIVVLFWTVLGSAGSLPFLIADNPNISVTDAFFESFSALTTTGATVIVGLDELPKAILFYRQFLQWFGGMGIIVLAVAILPVLGIGGMQLYRAEIPGPVKDTKMTPRIAETAKALWYIYLSLTIACAVAFWLAGMTPFDAISHSFSTIAIGGFSTHDASMGYFDSYAINLITVVFLLISACNFTLHFAAFASGGVHPKYYWKDPEFRAFIFIQVLLFLVCFLLLLKHHSYTSPYDAFDQALFQTVSISTTAGFTTTGFADWPLFLPVLLLFSSFIGGCAGSTGGGMKVIRILLLTLQGARELKRLVHPRAVYTIKVGGSALPQRVVDAVWGFFSAYALVFVVCMLGLIATGMDELSAFSAVAATLNNLGPGLGEVALHFGDVNDKAKWVLIVSMLFGRLEIFTLLILLTPTFWRS.

The Cytoplasmic segment spans residues 1 to 2 (MQ). Residues 3-29 (FRSIIRIVGLLLALFSVTMLAPALVAL) form a helical membrane-spanning segment. The Periplasmic segment spans residues 30-35 (LYRDGA). Residues 36-57 (GVPFVTTFFVLLFCGAMCWFPN) traverse the membrane as a helical segment. Residues 58–65 (RRHKHELK) lie on the Cytoplasmic side of the membrane. A helical transmembrane segment spans residues 66-90 (SRDGFLIVVLFWTVLGSAGSLPFLI). The segment at residues 98 to 109 (VTDAFFESFSAL) is an intramembrane region (helical; Pore-forming). The stretch at 110–115 (TTTGAT) is an intramembrane region. A selectivity filter part 1 region spans residues 110-115 (TTTGAT). Positions 111 and 112 each coordinate K(+). The Periplasmic segment spans residues 116-124 (VIVGLDELP). The helical transmembrane segment at 125 to 150 (KAILFYRQFLQWFGGMGIIVLAVAIL) threads the bilayer. Residues 151-177 (PVLGIGGMQLYRAEIPGPVKDTKMTPR) are Cytoplasmic-facing. The chain crosses the membrane as a helical span at residues 178 to 202 (IAETAKALWYIYLSLTIACAVAFWL). Topologically, residues 203-205 (AGM) are periplasmic. An intramembrane region is located at residue T206. The segment at residues 207-218 (PFDAISHSFSTI) is an intramembrane region (helical; Pore-forming). The stretch at 219–224 (AIGGFS) is an intramembrane region. A selectivity filter part 2 region spans residues 219–224 (AIGGFS). I220 and G221 together coordinate K(+). Topologically, residues 225 to 234 (THDASMGYFD) are periplasmic. Positions 235–250 (SYAINLITVVFLLISA) form an intramembrane region, helical. Residues 276-296 (FRAFIFIQVLLFLVCFLLLLK) traverse the membrane as a helical segment. An intramembrane region (helical; Pore-forming) is located at residues 303–318 (PYDAFDQALFQTVSIS). The stretch at 319–324 (TTAGFT) is an intramembrane region. Residues 319–324 (TTAGFT) form a selectivity filter part 3 region. 2 residues coordinate K(+): T320 and A321. The Periplasmic segment spans residues 325–332 (TTGFADWP). An intramembrane region (helical) is located at residues 333–344 (LFLPVLLLFSSF). Residues 345–357 (IGGCAGSTGGGMK) constitute an intramembrane region (note=Loop between two helices). A helical membrane pass occupies residues 392–419 (PQRVVDAVWGFFSAYALVFVVCMLGLIA). At 420 to 421 (TG) the chain is on the periplasmic side. Residues 422–423 (MD) lie within the membrane without spanning it. Positions 424–434 (ELSAFSAVAAT) form an intramembrane region, helical; Pore-forming. An intramembrane segment occupies 435-441 (LNNLGPG). The tract at residues 436–441 (NNLGPG) is selectivity filter part 4. Positions 437 and 438 each coordinate K(+). The Periplasmic segment spans residues 442-453 (LGEVALHFGDVN). Residues 454–465 (DKAKWVLIVSML) constitute an intramembrane region (helical).

This sequence belongs to the TrkH potassium transport family. Homodimer.

The protein localises to the cell inner membrane. Low-affinity potassium transport system. Interacts with trk system potassium uptake protein TrkA and requires TrkE for transport activity. Selective for permeation of potassium ion and rubidium ion over smaller ions such as natrium or litium. The chain is Trk system potassium uptake protein TrkH from Vibrio parahaemolyticus serotype O3:K6 (strain RIMD 2210633).